The primary structure comprises 252 residues: MRKKFGIIVALIALTTLLSGCTEINEPITPNSDGIWNTIFVYPVSWLITNVAGVFNEGYGLAIIIVTLFVRLLLMPLNVKQIKSSKAMQEIQPKLQEIQKKYTSKDANTQQKLQQETMELFQKNGVNPLAGCLPILVQMPIFVAMYHAIMRTPEISTHSFLWFQLGSPDYILPILTGLFTFLQQKLMMSTNTSMNSNPQMKLQMQIMLYVMPIMIGVMAFFFPAALALYWVTGNIFMVFQTLLINKPMMAKK.

An N-terminal signal peptide occupies residues 1–20; sequence MRKKFGIIVALIALTTLLSG. C21 is lipidated: N-palmitoyl cysteine. C21 carries the S-diacylglycerol cysteine lipid modification. The next 5 membrane-spanning stretches (helical) occupy residues 59–79, 129–149, 160–180, 206–226, and 228–248; these read YGLA…PLNV, LAGC…YHAI, FLWF…GLFT, IMLY…PAAL, and LYWV…NKPM.

This sequence belongs to the OXA1/ALB3/YidC family. Type 2 subfamily.

The protein localises to the cell membrane. In terms of biological role, required for the insertion and/or proper folding and/or complex formation of integral membrane proteins into the membrane. Involved in integration of membrane proteins that insert both dependently and independently of the Sec translocase complex, as well as at least some lipoproteins. The chain is Membrane protein insertase YidC from Oceanobacillus iheyensis (strain DSM 14371 / CIP 107618 / JCM 11309 / KCTC 3954 / HTE831).